Here is a 366-residue protein sequence, read N- to C-terminus: tRNA 2-selenouridine synthase (366 aa).

Residues 12–135 (FLNDVPMMDA…MRTFLLDTLH (124 aa)) form the Rhodanese domain. Cysteine 95 functions as the S-selanylcysteine intermediate in the catalytic mechanism.

The protein belongs to the SelU family. As to quaternary structure, monomer.

The catalysed reaction is 5-methylaminomethyl-2-thiouridine(34) in tRNA + selenophosphate + (2E)-geranyl diphosphate + H2O + H(+) = 5-methylaminomethyl-2-selenouridine(34) in tRNA + (2E)-thiogeraniol + phosphate + diphosphate. It carries out the reaction 5-methylaminomethyl-2-thiouridine(34) in tRNA + (2E)-geranyl diphosphate = 5-methylaminomethyl-S-(2E)-geranyl-thiouridine(34) in tRNA + diphosphate. It catalyses the reaction 5-methylaminomethyl-S-(2E)-geranyl-thiouridine(34) in tRNA + selenophosphate + H(+) = 5-methylaminomethyl-2-(Se-phospho)selenouridine(34) in tRNA + (2E)-thiogeraniol. The enzyme catalyses 5-methylaminomethyl-2-(Se-phospho)selenouridine(34) in tRNA + H2O = 5-methylaminomethyl-2-selenouridine(34) in tRNA + phosphate. Functionally, involved in the post-transcriptional modification of the uridine at the wobble position (U34) of tRNA(Lys), tRNA(Glu) and tRNA(Gln). Catalyzes the conversion of 2-thiouridine (S2U-RNA) to 2-selenouridine (Se2U-RNA). Acts in a two-step process involving geranylation of 2-thiouridine (S2U) to S-geranyl-2-thiouridine (geS2U) and subsequent selenation of the latter derivative to 2-selenouridine (Se2U) in the tRNA chain. In Pseudomonas syringae pv. tomato (strain ATCC BAA-871 / DC3000), this protein is tRNA 2-selenouridine synthase.